We begin with the raw amino-acid sequence, 468 residues long: COBRA-like protein 5 (468 aa).

The N-terminal stretch at 1 to 22 is a signal peptide; it reads MELHRCSLLALLLAVTCSVAVA. N-linked (GlcNAc...) asparagine glycosylation is found at Asn31, Asn156, Asn164, and Asn228. The tract at residues 251–278 is disordered; sequence GGGKNARAGDGRSRRNSGGGGGHSGGTE. 3 N-linked (GlcNAc...) asparagine glycosylation sites follow: Asn340, Asn355, and Asn374. A lipid anchor (GPI-anchor amidated asparagine) is attached at Asn443. Positions 444-468 are cleaved as a propeptide — removed in mature form; sequence SAPIGPPRSVAAAASAILVVLLLVA.

It belongs to the COBRA family. Expressed mainly in developing sclerenchyma cells and in vascular bundles.

The protein localises to the cell membrane. Involved in determining the orientation of cell expansion, probably by playing an important role in cellulose deposition. May act by recruiting cellulose synthesizing complexes to discrete positions on the cell surface. This is COBRA-like protein 5 (BC1) from Oryza sativa subsp. indica (Rice).